An 86-amino-acid polypeptide reads, in one-letter code: Allergen Api g 5 (86 aa).

The N-linked (GlcNAc...) asparagine glycan is linked to Asn62.

This sequence belongs to the oxygen-dependent FAD-linked oxidoreductase family. It depends on FAD as a cofactor. In terms of processing, carries MUXF and MMXF, two complex N-linked glycans with alpha-1,3-fucose and beta-1,2-xylose residues in their structures. MMXF is added to Asn-62.

This Apium graveolens (Celery) protein is Allergen Api g 5.